The primary structure comprises 200 residues: Potassium-transporting ATPase KdpC subunit (200 aa).

Residues 7–27 (PALVMIVLFTILTGLIYPLAM) traverse the membrane as a helical segment.

It belongs to the KdpC family. The system is composed of three essential subunits: KdpA, KdpB and KdpC.

It is found in the cell inner membrane. Functionally, part of the high-affinity ATP-driven potassium transport (or Kdp) system, which catalyzes the hydrolysis of ATP coupled with the electrogenic transport of potassium into the cytoplasm. This subunit acts as a catalytic chaperone that increases the ATP-binding affinity of the ATP-hydrolyzing subunit KdpB by the formation of a transient KdpB/KdpC/ATP ternary complex. This is Potassium-transporting ATPase KdpC subunit from Methylocella silvestris (strain DSM 15510 / CIP 108128 / LMG 27833 / NCIMB 13906 / BL2).